A 96-amino-acid chain; its full sequence is Prokineticin Bm8-f (96 aa).

A signal peptide spans 1-19; the sequence is MKCFAQIVVLLLVIAFSHG. 5 cysteine pairs are disulfide-bonded: Cys-26-Cys-38, Cys-32-Cys-50, Cys-37-Cys-78, Cys-60-Cys-86, and Cys-80-Cys-95.

The protein belongs to the AVIT (prokineticin) family. In terms of tissue distribution, expressed by the skin glands.

The protein localises to the secreted. Potent agonist for both PKR1/PROKR1 and PKR2/PROKR2, and inducer of a potent and long-lasting hyperalgesia. Also potentiates capsaicin-induced TRPV1 current, when tested on DRG neurons. At subnanomolar concentrations, this protein both induces potent chemotaxis of macrophages and stimulates LPS-induced production of the pro-inflammatory cytokines IL-1 and IL-12. In vivo, potently stimulates the contraction of the guinea-pig gastrointestinal (GI) smooth muscle (nanomolar concentration). The sequence is that of Prokineticin Bm8-f from Bombina maxima (Giant fire-bellied toad).